The chain runs to 493 residues: Ecdysteroid UDP-glucosyltransferase (493 aa).

Residues 1-17 (MIFILLTTLLAVGGAQT) form the signal peptide.

The protein belongs to the UDP-glycosyltransferase family.

Catalyzes the transfer of glucose from UDP-glucose to ecdysteroids which are insect molting hormones. Expression of egt interferes with normal insect development and block molting. The sequence is that of Ecdysteroid UDP-glucosyltransferase (egt) from Choristoneura fumiferana defective polyhedrosis virus (Cfdef).